The following is a 628-amino-acid chain: Inactive sodium-dependent neutral amino acid transporter B(0)AT3 (628 aa).

Residues methionine 1–glutamine 26 are Cytoplasmic-facing. Residues tyrosine 27–leucine 47 traverse the membrane as a helical segment. At cysteine 48–tyrosine 51 the chain is on the extracellular side. Residues glycine 52–valine 74 form a helical membrane-spanning segment. Residues glutamate 75–glycine 88 are Cytoplasmic-facing. The chain crosses the membrane as a helical span at residues valine 89–isoleucine 111. At serine 112–serine 178 the chain is on the extracellular side. N-linked (GlcNAc...) asparagine glycans are attached at residues asparagine 144, asparagine 168, and asparagine 174. Residues isoleucine 179–glycine 201 traverse the membrane as a helical segment. At isoleucine 202–lysine 207 the chain is on the cytoplasmic side. The chain crosses the membrane as a helical span at residues valine 208–leucine 230. Residues proline 231–valine 253 lie on the Extracellular side of the membrane. The helical transmembrane segment at tryptophan 254–alanine 276 threads the bilayer. Residues serine 277–aspartate 288 lie on the Cytoplasmic side of the membrane. Residues alanine 289 to leucine 311 form a helical membrane-spanning segment. Residues glycine 312–alanine 399 are Extracellular-facing. Residue asparagine 354 is glycosylated (N-linked (GlcNAc...) asparagine). The chain crosses the membrane as a helical span at residues proline 400–valine 422. Over glutamate 423 to glutamate 442 the chain is Cytoplasmic. Residues alanine 443–asparagine 465 form a helical membrane-spanning segment. Residues tyrosine 466–phenylalanine 474 are Extracellular-facing. Residues alanine 475–methionine 497 form a helical membrane-spanning segment. Residues lysine 498–arginine 517 are Cytoplasmic-facing. A helical transmembrane segment spans residues leucine 518–tryptophan 540. Residues lysine 541–arginine 568 lie on the Extracellular side of the membrane. A helical transmembrane segment spans residues alanine 569–leucine 591. Topologically, residues threonine 592–arginine 628 are cytoplasmic. Positions aspartate 602–arginine 628 are disordered.

This sequence belongs to the sodium:neurotransmitter symporter (SNF) (TC 2.A.22) family. SLC6A18 subfamily. As to expression, abundantly expressed in kidney, but not in intestine.

It localises to the membrane. In terms of biological role, does not show neutral amino acid transporter activity. This Homo sapiens (Human) protein is Inactive sodium-dependent neutral amino acid transporter B(0)AT3.